The chain runs to 416 residues: E3 ubiquitin-protein ligase makorin-2 (416 aa).

C3H1-type zinc fingers lie at residues 2-29 (STKQ…HDLA) and 31-58 (SKPS…HTRP). Residues 113-122 (NLSGMAERKT) show a composition bias toward basic and acidic residues. Residues 113-142 (NLSGMAERKTQPSMVSNPGSCSDPQPSPEM) form a disordered region. Residues 123–136 (QPSMVSNPGSCSDP) are compositionally biased toward polar residues. Ser139 is modified (phosphoserine). The C3H1-type 3 zinc finger occupies 165 to 192 (SNEQQLCPYAAAGECRFGDACVYLHGEV). The interval 193 to 222 (CEICRLQVLHPFDPEQRKAHEKICMLTFEH) is makorin-type Cys-His. The segment at 238 to 292 (CSICMEVILEKASASERRFGILSNCNHTYCLSCIRQWRCAKQFENPIIKSCPECR) adopts an RING-type zinc-finger fold. The segment at 321 to 350 (GMGKKACKYFEQGKGTCPFGSKCLYRHAYP) adopts a C3H1-type 4 zinc-finger fold.

Interacts with PDLIM2 (via LIM zinc-binding domain). Interacts with RELA. Expressed in sperm, with significantly reduced expression in sperm of patients with oligoasthenoteratozoospermia (at protein level). Widely expressed with expression in testis, ovary, small intestine, colon, peripheral blood leukocytes, fetal liver, bone marrow, thymus, lymph node and spleen.

It localises to the cytoplasm. Its subcellular location is the nucleus. It carries out the reaction S-ubiquitinyl-[E2 ubiquitin-conjugating enzyme]-L-cysteine + [acceptor protein]-L-lysine = [E2 ubiquitin-conjugating enzyme]-L-cysteine + N(6)-ubiquitinyl-[acceptor protein]-L-lysine.. Its pathway is protein modification; protein ubiquitination. In terms of biological role, E3 ubiquitin ligase catalyzing the covalent attachment of ubiquitin moieties onto substrate proteins. Promotes the polyubiquitination and proteasome-dependent degradation of RELA/p65, thereby suppressing RELA-mediated NF-kappaB transactivation and negatively regulating inflammatory responses. Plays a role in the regulation of spermiation and in male fertility. The polypeptide is E3 ubiquitin-protein ligase makorin-2 (MKRN2) (Homo sapiens (Human)).